The following is a 1097-amino-acid chain: DNA-directed RNA polymerase subunit beta (1097 aa).

A disordered region spans residues 1072-1097 (QDINPRRNTPSRPTYESLGTSEYEED). Polar residues predominate over residues 1077–1091 (RRNTPSRPTYESLGT).

The protein belongs to the RNA polymerase beta chain family. In terms of assembly, in cyanobacteria the RNAP catalytic core is composed of 2 alpha, 1 beta, 1 beta', 1 gamma and 1 omega subunit. When a sigma factor is associated with the core the holoenzyme is formed, which can initiate transcription.

The enzyme catalyses RNA(n) + a ribonucleoside 5'-triphosphate = RNA(n+1) + diphosphate. DNA-dependent RNA polymerase catalyzes the transcription of DNA into RNA using the four ribonucleoside triphosphates as substrates. The polypeptide is DNA-directed RNA polymerase subunit beta (Prochlorococcus marinus (strain AS9601)).